Here is a 110-residue protein sequence, read N- to C-terminus: Nitrogenase-stabilizing/protective protein NifW (110 aa).

Belongs to the NifW family. Homotrimer; associates with NifD.

Its function is as follows. May protect the nitrogenase Fe-Mo protein from oxidative damage. This Acidithiobacillus ferrooxidans (strain ATCC 23270 / DSM 14882 / CIP 104768 / NCIMB 8455) (Ferrobacillus ferrooxidans (strain ATCC 23270)) protein is Nitrogenase-stabilizing/protective protein NifW.